We begin with the raw amino-acid sequence, 437 residues long: Trigger factor (437 aa).

One can recognise a PPIase FKBP-type domain in the interval 163–248 (GDRVIIDFEG…LNNVSEPTLP (86 aa)).

The protein belongs to the FKBP-type PPIase family. Tig subfamily.

Its subcellular location is the cytoplasm. The enzyme catalyses [protein]-peptidylproline (omega=180) = [protein]-peptidylproline (omega=0). Functionally, involved in protein export. Acts as a chaperone by maintaining the newly synthesized protein in an open conformation. Functions as a peptidyl-prolyl cis-trans isomerase. The chain is Trigger factor from Neisseria gonorrhoeae (strain NCCP11945).